Here is a 242-residue protein sequence, read N- to C-terminus: Ribonuclease 3 (242 aa).

The RNase III domain occupies alanine 18–glycine 146. Residue glutamate 59 coordinates Mg(2+). Aspartate 63 is a catalytic residue. Residues aspartate 132 and glutamate 135 each contribute to the Mg(2+) site. The active site involves glutamate 135. The 70-residue stretch at asparagine 172–leucine 241 folds into the DRBM domain. Residues arginine 218–alanine 227 show a composition bias toward basic and acidic residues. Residues arginine 218–proline 242 form a disordered region.

It belongs to the ribonuclease III family. In terms of assembly, homodimer. Requires Mg(2+) as cofactor.

Its subcellular location is the cytoplasm. The catalysed reaction is Endonucleolytic cleavage to 5'-phosphomonoester.. In terms of biological role, digests double-stranded RNA. Involved in the processing of primary rRNA transcript to yield the immediate precursors to the large and small rRNAs (23S and 16S). Processes some mRNAs, and tRNAs when they are encoded in the rRNA operon. Processes pre-crRNA and tracrRNA of type II CRISPR loci if present in the organism. This is Ribonuclease 3 from Protochlamydia amoebophila (strain UWE25).